A 291-amino-acid chain; its full sequence is tRNA dimethylallyltransferase (291 aa).

Residue 9-16 (GTTASGKS) coordinates ATP. Residue 11–16 (TASGKS) coordinates substrate. Residues 34 to 37 (DSLA) are interaction with substrate tRNA.

This sequence belongs to the IPP transferase family. In terms of assembly, monomer. Mg(2+) is required as a cofactor.

The catalysed reaction is adenosine(37) in tRNA + dimethylallyl diphosphate = N(6)-dimethylallyladenosine(37) in tRNA + diphosphate. Catalyzes the transfer of a dimethylallyl group onto the adenine at position 37 in tRNAs that read codons beginning with uridine, leading to the formation of N6-(dimethylallyl)adenosine (i(6)A). This is tRNA dimethylallyltransferase from Campylobacter concisus (strain 13826).